Reading from the N-terminus, the 616-residue chain is Chaperone protein HscA (616 aa).

It belongs to the heat shock protein 70 family.

In terms of biological role, chaperone involved in the maturation of iron-sulfur cluster-containing proteins. Has a low intrinsic ATPase activity which is markedly stimulated by HscB. Involved in the maturation of IscU. The sequence is that of Chaperone protein HscA from Salmonella arizonae (strain ATCC BAA-731 / CDC346-86 / RSK2980).